Here is a 321-residue protein sequence, read N- to C-terminus: Polyamine aminopropyltransferase (321 aa).

One can recognise a PABS domain in the interval histidine 23 to aspartate 256. Glutamine 53 contributes to the S-methyl-5'-thioadenosine binding site. Spermidine-binding residues include histidine 84 and aspartate 108. S-methyl-5'-thioadenosine-binding positions include glutamate 127 and aspartate 159–glycine 160. The active-site Proton acceptor is the aspartate 177.

Belongs to the spermidine/spermine synthase family. Homodimer or homotetramer.

It localises to the cytoplasm. It catalyses the reaction S-adenosyl 3-(methylsulfanyl)propylamine + putrescine = S-methyl-5'-thioadenosine + spermidine + H(+). Its pathway is amine and polyamine biosynthesis; spermidine biosynthesis; spermidine from putrescine: step 1/1. Its function is as follows. Catalyzes the irreversible transfer of a propylamine group from the amino donor S-adenosylmethioninamine (decarboxy-AdoMet) to putrescine (1,4-diaminobutane) to yield spermidine. The chain is Polyamine aminopropyltransferase from Korarchaeum cryptofilum (strain OPF8).